The primary structure comprises 264 residues: Thymidylate synthase (264 aa).

Residue R21 coordinates dUMP. A (6R)-5,10-methylene-5,6,7,8-tetrahydrofolate-binding site is contributed by H51. 126-127 contributes to the dUMP binding site; that stretch reads RR. Catalysis depends on C146, which acts as the Nucleophile. Residues 166–169, N177, and 207–209 each bind dUMP; these read RSAD and HLY. D169 is a binding site for (6R)-5,10-methylene-5,6,7,8-tetrahydrofolate. A263 lines the (6R)-5,10-methylene-5,6,7,8-tetrahydrofolate pocket.

It belongs to the thymidylate synthase family. Bacterial-type ThyA subfamily. In terms of assembly, homodimer.

It is found in the cytoplasm. It catalyses the reaction dUMP + (6R)-5,10-methylene-5,6,7,8-tetrahydrofolate = 7,8-dihydrofolate + dTMP. It participates in pyrimidine metabolism; dTTP biosynthesis. Functionally, catalyzes the reductive methylation of 2'-deoxyuridine-5'-monophosphate (dUMP) to 2'-deoxythymidine-5'-monophosphate (dTMP) while utilizing 5,10-methylenetetrahydrofolate (mTHF) as the methyl donor and reductant in the reaction, yielding dihydrofolate (DHF) as a by-product. This enzymatic reaction provides an intracellular de novo source of dTMP, an essential precursor for DNA biosynthesis. The protein is Thymidylate synthase of Legionella pneumophila (strain Lens).